Reading from the N-terminus, the 231-residue chain is 5'-methylthioadenosine/S-adenosylhomocysteine nucleosidase (231 aa).

The active-site Proton acceptor is E12. Substrate is bound by residues G78, M153, and 174–175 (ME). Catalysis depends on D198, which acts as the Proton donor.

This sequence belongs to the PNP/UDP phosphorylase family. MtnN subfamily.

The enzyme catalyses S-adenosyl-L-homocysteine + H2O = S-(5-deoxy-D-ribos-5-yl)-L-homocysteine + adenine. It catalyses the reaction S-methyl-5'-thioadenosine + H2O = 5-(methylsulfanyl)-D-ribose + adenine. The catalysed reaction is 5'-deoxyadenosine + H2O = 5-deoxy-D-ribose + adenine. Its pathway is amino-acid biosynthesis; L-methionine biosynthesis via salvage pathway; S-methyl-5-thio-alpha-D-ribose 1-phosphate from S-methyl-5'-thioadenosine (hydrolase route): step 1/2. Functionally, catalyzes the irreversible cleavage of the glycosidic bond in both 5'-methylthioadenosine (MTA) and S-adenosylhomocysteine (SAH/AdoHcy) to adenine and the corresponding thioribose, 5'-methylthioribose and S-ribosylhomocysteine, respectively. Also cleaves 5'-deoxyadenosine, a toxic by-product of radical S-adenosylmethionine (SAM) enzymes, into 5-deoxyribose and adenine. The protein is 5'-methylthioadenosine/S-adenosylhomocysteine nucleosidase of Bacillus velezensis (strain DSM 23117 / BGSC 10A6 / LMG 26770 / FZB42) (Bacillus amyloliquefaciens subsp. plantarum).